A 543-amino-acid polypeptide reads, in one-letter code: Malate synthase (543 aa).

The active-site Proton acceptor is the R162. D449 serves as the catalytic Proton donor.

Belongs to the malate synthase family.

The catalysed reaction is glyoxylate + acetyl-CoA + H2O = (S)-malate + CoA + H(+). It participates in carbohydrate metabolism; glyoxylate cycle; (S)-malate from isocitrate: step 2/2. In Dictyostelium discoideum (Social amoeba), this protein is Malate synthase (masA).